The chain runs to 303 residues: Pycsar effector protein XpPycTIR (303 aa).

A nucleoside 3',5'-cyclic phosphate is bound at residue 14-138 (LVATLTEHRL…RRIAATLARR (125 aa)). The interval 154 to 273 (RVFIMSSVEA…DLAGLTTIPY (120 aa)) is TIR-like.

It is found in the cytoplasm. The enzyme catalyses NAD(+) + H2O = ADP-D-ribose + nicotinamide + H(+). Its function is as follows. Pycsar (pyrimidine cyclase system for antiphage resistance) provides immunity against bacteriophage. The pyrimidine cyclase (PycC) synthesizes cyclic nucleotides in response to infection; these serve as specific second messenger signals. The signals activate the adjacent effector, leading to bacterial cell death and abortive phage infection. A clade B Pycsar system. In terms of biological role, the effector gene of a two-gene Pycsar system. Expression of this and adjacent uridylate cyclase XpPycC (AC P0DV28) confers resistance to bacteriophage T7. When cells expressing the Pycsar system are infected by phage T7 at low multiplicity of infection (0.2 MOI) the culture survivey, at 2.0 MOI bacteria enter growth arrest. The same cells enter growth arrest after exposure to 2.5 mM cUMP but not cCMP; the effector protein responds only to the cUMP usually produced by its cognate NTP cyclase. NAD(+) levels in infected cells are depleted between 5 and 10 minutes after infection with T7 at MOI of 2. Probably only responds to cUMP. This is Pycsar effector protein XpPycTIR from Xanthomonas perforans.